The sequence spans 78 residues: MRSVWKGCFYKNNNNGLSKSSTVINTMLKKKFTLHDGKSYKSILIDRSMVGLKIGEFVFTRKMGVLHKKKVLKKKGKK.

Belongs to the universal ribosomal protein uS19 family.

It is found in the mitochondrion. This Acanthamoeba castellanii (Amoeba) protein is Small ribosomal subunit protein uS19m (RPS19).